A 239-amino-acid polypeptide reads, in one-letter code: Peptidyl-tRNA hydrolase (239 aa).

Tyr14 is a tRNA binding site. His19 acts as the Proton acceptor in catalysis. Residues Phe64, Asn66, and Asn112 each coordinate tRNA. Positions 188-225 (GGKPDAEEPQAPKKQVGQSHIHKARNAAQPKKLPATGP) are disordered.

The protein belongs to the PTH family. Monomer.

The protein localises to the cytoplasm. It carries out the reaction an N-acyl-L-alpha-aminoacyl-tRNA + H2O = an N-acyl-L-amino acid + a tRNA + H(+). Functionally, hydrolyzes ribosome-free peptidyl-tRNAs (with 1 or more amino acids incorporated), which drop off the ribosome during protein synthesis, or as a result of ribosome stalling. In terms of biological role, catalyzes the release of premature peptidyl moieties from peptidyl-tRNA molecules trapped in stalled 50S ribosomal subunits, and thus maintains levels of free tRNAs and 50S ribosomes. The sequence is that of Peptidyl-tRNA hydrolase from Sinorhizobium fredii (strain NBRC 101917 / NGR234).